We begin with the raw amino-acid sequence, 1168 residues long: Probable pre-mRNA-splicing factor ATP-dependent RNA helicase DEAH5 (1168 aa).

The interval 76-206 is disordered; it reads IYPPKPKSEK…KDEYVEEDKG (131 aa). Basic and acidic residues-rich tracts occupy residues 81 to 172 and 180 to 206; these read PKSE…DRRS and GRGD…EDKG. Residues 214–283 enclose the S1 motif domain; it reads YQVYKGRVTR…SSDKYSLSMR (70 aa). Positions 289–326 are disordered; that stretch reads TGRDLIPLRKPSDEDDSSRSNPSYRTKDGQVTKTGISG. Residue Ser411 is modified to Phosphoserine. Positions 525-688 constitute a Helicase ATP-binding domain; it reads IQAVHDNQVL…FFNCNIFTIP (164 aa). Residue 538-545 participates in ATP binding; that stretch reads GETGSGKT. Residues 635–638 carry the DEAH box motif; that stretch reads DEAH. The 181-residue stretch at 706–886 folds into the Helicase C-terminal domain; sequence YLDAALITVL…MTTLTMKAMG (181 aa).

This sequence belongs to the DEAD box helicase family. DEAH subfamily. PRP22 sub-subfamily.

It is found in the nucleus. The catalysed reaction is ATP + H2O = ADP + phosphate + H(+). May be involved in pre-mRNA splicing. The protein is Probable pre-mRNA-splicing factor ATP-dependent RNA helicase DEAH5 of Arabidopsis thaliana (Mouse-ear cress).